We begin with the raw amino-acid sequence, 565 residues long: Urocanate hydratase (565 aa).

Residues 58 to 59 (GG), Q136, 182 to 184 (GMG), E202, R207, 245 to 246 (NA), 266 to 270 (QTSAH), 276 to 277 (YL), and Y325 each bind NAD(+). C413 is a catalytic residue. G495 contacts NAD(+).

Belongs to the urocanase family. It depends on NAD(+) as a cofactor.

It localises to the cytoplasm. It carries out the reaction 4-imidazolone-5-propanoate = trans-urocanate + H2O. Its pathway is amino-acid degradation; L-histidine degradation into L-glutamate; N-formimidoyl-L-glutamate from L-histidine: step 2/3. Functionally, catalyzes the conversion of urocanate to 4-imidazolone-5-propionate. This chain is Urocanate hydratase, found in Vibrio vulnificus (strain CMCP6).